The sequence spans 439 residues: Xylose isomerase (439 aa).

Catalysis depends on residues His103 and Asp106. Residues Glu234, Glu270, His273, Asp298, Asp309, Asp311, and Asp341 each contribute to the Mg(2+) site.

It belongs to the xylose isomerase family. In terms of assembly, homotetramer. Mg(2+) serves as cofactor.

It is found in the cytoplasm. The catalysed reaction is alpha-D-xylose = alpha-D-xylulofuranose. This Bacteroides fragilis (strain ATCC 25285 / DSM 2151 / CCUG 4856 / JCM 11019 / LMG 10263 / NCTC 9343 / Onslow / VPI 2553 / EN-2) protein is Xylose isomerase.